A 309-amino-acid chain; its full sequence is Ribonuclease Z (309 aa).

Positions 63, 65, 67, 68, 145, 216, and 274 each coordinate Zn(2+). Aspartate 67 functions as the Proton acceptor in the catalytic mechanism.

Belongs to the RNase Z family. Homodimer. Requires Zn(2+) as cofactor.

The enzyme catalyses Endonucleolytic cleavage of RNA, removing extra 3' nucleotides from tRNA precursor, generating 3' termini of tRNAs. A 3'-hydroxy group is left at the tRNA terminus and a 5'-phosphoryl group is left at the trailer molecule.. Zinc phosphodiesterase, which displays some tRNA 3'-processing endonuclease activity. Probably involved in tRNA maturation, by removing a 3'-trailer from precursor tRNA. The polypeptide is Ribonuclease Z (Streptococcus equi subsp. zooepidemicus (strain H70)).